Consider the following 130-residue polypeptide: Small ribosomal subunit protein uS9 (130 aa).

It belongs to the universal ribosomal protein uS9 family.

The protein is Small ribosomal subunit protein uS9 (rpsI) of Shigella flexneri.